An 885-amino-acid polypeptide reads, in one-letter code: Chromatin assembly factor 1 subunit A-B (885 aa).

Disordered regions lie at residues methionine 1–glutamine 24, glutamate 115–cysteine 157, leucine 176–lysine 361, and valine 536–lysine 605. A compositionally biased stretch (low complexity) spans lysine 12–lysine 21. 3 stretches are compositionally biased toward polar residues: residues aspartate 116–asparagine 128, glutamine 134–cysteine 157, and serine 182–serine 193. Low complexity-rich tracts occupy residues valine 211–valine 227 and serine 237–threonine 254. Residues serine 251–lysine 376 are a coiled coil. Residues serine 255–lysine 361 show a composition bias toward basic and acidic residues. Composition is skewed to acidic residues over residues valine 536–glycine 548 and glutamate 557–glycine 573. Residues cysteine 629–serine 665 are necessary for homodimerization, competence for chromatin assembly.

Belongs to the CHAF1A family. Homodimer.

It localises to the nucleus. Its function is as follows. Involved in chromatin assembly in DNA replication and DNA repair. The chain is Chromatin assembly factor 1 subunit A-B (chaf1a-b) from Xenopus laevis (African clawed frog).